Here is a 547-residue protein sequence, read N- to C-terminus: ATP synthase subunit alpha (547 aa).

Residue 172 to 179 participates in ATP binding; it reads GDRKTGKT.

This sequence belongs to the ATPase alpha/beta chains family. In terms of assembly, F-type ATPases have 2 components, CF(1) - the catalytic core - and CF(0) - the membrane proton channel. CF(1) has five subunits: alpha(3), beta(3), gamma(1), delta(1), epsilon(1). CF(0) has three main subunits: a(1), b(2) and c(9-12). The alpha and beta chains form an alternating ring which encloses part of the gamma chain. CF(1) is attached to CF(0) by a central stalk formed by the gamma and epsilon chains, while a peripheral stalk is formed by the delta and b chains.

It localises to the cell membrane. It carries out the reaction ATP + H2O + 4 H(+)(in) = ADP + phosphate + 5 H(+)(out). Its function is as follows. Produces ATP from ADP in the presence of a proton gradient across the membrane. The alpha chain is a regulatory subunit. This Corynebacterium glutamicum (strain R) protein is ATP synthase subunit alpha.